The following is a 212-amino-acid chain: dITP/XTP pyrophosphatase (212 aa).

7–12 provides a ligand contact to substrate; that stretch reads SRNKKK. The active-site Proton acceptor is the D72. D72 is a Mg(2+) binding site. Residues S73, 163 to 166, K187, and 192 to 193 each bind substrate; these read FGYD and HR. The tract at residues 164–194 is disordered; sequence GYDPLFEPAEAPGQSSAELTPERKDELSHRG. Over residues 183-192 the composition is skewed to basic and acidic residues; it reads TPERKDELSH.

The protein belongs to the HAM1 NTPase family. Homodimer. Requires Mg(2+) as cofactor.

It catalyses the reaction XTP + H2O = XMP + diphosphate + H(+). The enzyme catalyses dITP + H2O = dIMP + diphosphate + H(+). It carries out the reaction ITP + H2O = IMP + diphosphate + H(+). In terms of biological role, pyrophosphatase that catalyzes the hydrolysis of nucleoside triphosphates to their monophosphate derivatives, with a high preference for the non-canonical purine nucleotides XTP (xanthosine triphosphate), dITP (deoxyinosine triphosphate) and ITP. Seems to function as a house-cleaning enzyme that removes non-canonical purine nucleotides from the nucleotide pool, thus preventing their incorporation into DNA/RNA and avoiding chromosomal lesions. The protein is dITP/XTP pyrophosphatase of Corynebacterium urealyticum (strain ATCC 43042 / DSM 7109).